A 467-amino-acid chain; its full sequence is Transcription factor TGAL7 (467 aa).

Residues 1–10 are compositionally biased toward basic and acidic residues; that stretch reads MGGSREEDRQ. 2 disordered regions span residues 1–42 and 105–184; these read MGGS…KESS and QLQV…KTLR. Residues 25 to 41 are compositionally biased toward low complexity; sequence SSSPTTMIASSSMSKES. A compositionally biased stretch (polar residues) spans 120–129; the sequence is QGGQKINSSV. Residues 145-157 show a composition bias toward basic and acidic residues; sequence KDNKNSSLIKKEG. Positions 158-168 are enriched in polar residues; that stretch reads SSSGKGATTSN. Residues 169–182 show a composition bias toward basic and acidic residues; that stretch reads DPEREGRRTLDPKT. One can recognise a bZIP domain in the interval 179-223; that stretch reads DPKTLRRLAQNREAARKSRLRKKAYIQQLESSRIRLSQLEQQVHV. Residues 181–201 are basic motif; that stretch reads KTLRRLAQNREAARKSRLRKK. The leucine-zipper stretch occupies residues 207 to 221; sequence LESSRIRLSQLEQQV. Residues 247–458 form the DOG1 domain; it reads ASLFDLEYGR…RALSTLWVAR (212 aa).

The protein belongs to the bZIP family. As to quaternary structure, interacts with NPR5/NH4, NH5.1 and NH5.2.

Its subcellular location is the nucleus. Transcriptional regulator involved in defense response. In Oryza sativa subsp. japonica (Rice), this protein is Transcription factor TGAL7.